Consider the following 275-residue polypeptide: Tryptophan synthase alpha chain (275 aa).

Residues Glu-49 and Asp-60 each act as proton acceptor in the active site.

The protein belongs to the TrpA family. In terms of assembly, tetramer of two alpha and two beta chains.

The enzyme catalyses (1S,2R)-1-C-(indol-3-yl)glycerol 3-phosphate + L-serine = D-glyceraldehyde 3-phosphate + L-tryptophan + H2O. The protein operates within amino-acid biosynthesis; L-tryptophan biosynthesis; L-tryptophan from chorismate: step 5/5. Its function is as follows. The alpha subunit is responsible for the aldol cleavage of indoleglycerol phosphate to indole and glyceraldehyde 3-phosphate. This Nitrosomonas europaea (strain ATCC 19718 / CIP 103999 / KCTC 2705 / NBRC 14298) protein is Tryptophan synthase alpha chain.